We begin with the raw amino-acid sequence, 619 residues long: Phosphoenolpyruvate carboxykinase [GTP] (619 aa).

Substrate-binding positions include Arg81 and 230 to 232 (YGG). Residues Lys239 and His259 each contribute to the Mn(2+) site. Ser281 is a substrate binding site. 282–287 (ACGKTN) is a binding site for GTP. Cys283 is an active-site residue. Position 306 (Asp306) interacts with Mn(2+). A substrate-binding site is contributed by 399–401 (NSR). GTP-binding positions include Arg401, Arg432, and 525 to 528 (YGQN).

Belongs to the phosphoenolpyruvate carboxykinase [GTP] family. Monomer. Requires Mn(2+) as cofactor.

It carries out the reaction oxaloacetate + GTP = phosphoenolpyruvate + GDP + CO2. Functionally, in parasitic nematodes PEPCK carboxylates phosphoenolpyruvate to oxaloacetate thus introducing the products of glycolysis to mitochondrial metabolism. Catalyzes the conversion of oxaloacetate (OAA) to phosphoenolpyruvate (PEP), the rate-limiting step in the metabolic pathway that produces glucose from lactate and other precursors derived from the citric acid cycle. This is Phosphoenolpyruvate carboxykinase [GTP] (PEPCK) from Haemonchus contortus (Barber pole worm).